The chain runs to 602 residues: Auxin response factor 18 (602 aa).

The TF-B3 DNA-binding region spans 128–230; that stretch reads FVKILTASDT…DLRVGVRRLA (103 aa). The disordered stretch occupies residues 359–396; that stretch reads TSPISTPAQQPQSKCKRSRPIEPSVKTPAPPSFLYSLP. Residues 360 to 371 are compositionally biased toward polar residues; that stretch reads SPISTPAQQPQS. A PB1 domain is found at 489–581; it reads RSRTKVQMQG…EVKKMTTKLK (93 aa).

The protein belongs to the ARF family. In terms of assembly, homodimers and heterodimers.

The protein localises to the nucleus. In terms of biological role, auxin response factors (ARFs) are transcriptional factors that bind specifically to the DNA sequence 5'-TGTCTC-3' found in the auxin-responsive promoter elements (AuxREs). Could act as transcriptional activator or repressor. Formation of heterodimers with Aux/IAA proteins may alter their ability to modulate early auxin response genes expression. This is Auxin response factor 18 (ARF18) from Arabidopsis thaliana (Mouse-ear cress).